The primary structure comprises 400 residues: Probable tRNA pseudouridine synthase D (400 aa).

Residue Asp-89 is the Nucleophile of the active site. Residues 162–357 enclose the TRUD domain; it reads GVPNYYGLQR…AGGDRKPALL (196 aa).

This sequence belongs to the pseudouridine synthase TruD family.

It carries out the reaction uridine(13) in tRNA = pseudouridine(13) in tRNA. Its function is as follows. Could be responsible for synthesis of pseudouridine from uracil-13 in transfer RNAs. In Methanopyrus kandleri (strain AV19 / DSM 6324 / JCM 9639 / NBRC 100938), this protein is Probable tRNA pseudouridine synthase D.